A 230-amino-acid polypeptide reads, in one-letter code: MAKQTKKQQEVAKLDPEKLYTVDEAIAVLREHKAKFDETVEVAMNLGVDPRHADQMVRGMVSLPSGTGKTVKVAVFAKGDNAEKATAAGADKVGAEDLMEDMQNGNLDYDRVIATPDMMGVVGRLGKVLGPKGLMPNPKLGTVTPNVEQAVKDAKGGQVEFRVEKMGIIHSGIGKMSFKDEDLKANFKSFTDAIVKAKPSGAKGKYVKKVSLTSSMGPGLKIDLAEVEGA.

Belongs to the universal ribosomal protein uL1 family. In terms of assembly, part of the 50S ribosomal subunit.

Binds directly to 23S rRNA. The L1 stalk is quite mobile in the ribosome, and is involved in E site tRNA release. Its function is as follows. Protein L1 is also a translational repressor protein, it controls the translation of the L11 operon by binding to its mRNA. This is Large ribosomal subunit protein uL1 from Erythrobacter litoralis (strain HTCC2594).